Reading from the N-terminus, the 252-residue chain is Ribonuclease 3 (252 aa).

The region spanning 3–125 is the RNase III domain; the sequence is LATLETRLDH…IFGAAFLDGG (123 aa). E38 serves as a coordination point for Mg(2+). D42 is an active-site residue. The Mg(2+) site is built by D111 and E114. E114 is a catalytic residue. Residues 152–222 form the DRBM domain; it reads DAKTLLQEFL…AKLALEAAQA (71 aa).

The protein belongs to the ribonuclease III family. As to quaternary structure, homodimer. Requires Mg(2+) as cofactor.

Its subcellular location is the cytoplasm. It catalyses the reaction Endonucleolytic cleavage to 5'-phosphomonoester.. In terms of biological role, digests double-stranded RNA. Involved in the processing of primary rRNA transcript to yield the immediate precursors to the large and small rRNAs (23S and 16S). Processes some mRNAs, and tRNAs when they are encoded in the rRNA operon. Processes pre-crRNA and tracrRNA of type II CRISPR loci if present in the organism. The sequence is that of Ribonuclease 3 from Bordetella petrii (strain ATCC BAA-461 / DSM 12804 / CCUG 43448).